Reading from the N-terminus, the 271-residue chain is Phosphatidylglycerol--prolipoprotein diacylglyceryl transferase (271 aa).

3 helical membrane-spanning segments follow: residues Leu-17–Ala-37, Ile-63–Tyr-83, and Ile-95–Ser-115. Arg-146 contacts a 1,2-diacyl-sn-glycero-3-phospho-(1'-sn-glycerol). Helical transmembrane passes span Ser-182–Ala-202, Gly-209–Phe-229, and Met-243–Trp-263.

It belongs to the Lgt family.

The protein localises to the cell inner membrane. The enzyme catalyses L-cysteinyl-[prolipoprotein] + a 1,2-diacyl-sn-glycero-3-phospho-(1'-sn-glycerol) = an S-1,2-diacyl-sn-glyceryl-L-cysteinyl-[prolipoprotein] + sn-glycerol 1-phosphate + H(+). It participates in protein modification; lipoprotein biosynthesis (diacylglyceryl transfer). Catalyzes the transfer of the diacylglyceryl group from phosphatidylglycerol to the sulfhydryl group of the N-terminal cysteine of a prolipoprotein, the first step in the formation of mature lipoproteins. This is Phosphatidylglycerol--prolipoprotein diacylglyceryl transferase from Polaromonas naphthalenivorans (strain CJ2).